Reading from the N-terminus, the 101-residue chain is Small ribosomal subunit protein uS14 (101 aa).

The protein belongs to the universal ribosomal protein uS14 family. As to quaternary structure, part of the 30S ribosomal subunit. Contacts proteins S3 and S10.

Binds 16S rRNA, required for the assembly of 30S particles and may also be responsible for determining the conformation of the 16S rRNA at the A site. The chain is Small ribosomal subunit protein uS14 from Rhizorhabdus wittichii (strain DSM 6014 / CCUG 31198 / JCM 15750 / NBRC 105917 / EY 4224 / RW1) (Sphingomonas wittichii).